A 308-amino-acid chain; its full sequence is Elongation factor Ts (308 aa).

Residues Thr-80–Val-83 form an involved in Mg(2+) ion dislocation from EF-Tu region.

Belongs to the EF-Ts family.

It localises to the cytoplasm. Functionally, associates with the EF-Tu.GDP complex and induces the exchange of GDP to GTP. It remains bound to the aminoacyl-tRNA.EF-Tu.GTP complex up to the GTP hydrolysis stage on the ribosome. The protein is Elongation factor Ts of Methylobacterium radiotolerans (strain ATCC 27329 / DSM 1819 / JCM 2831 / NBRC 15690 / NCIMB 10815 / 0-1).